Reading from the N-terminus, the 146-residue chain is Putative serine protease inhibitor SAV_2156 (146 aa).

A signal peptide spans 1–26; sequence MTKTTMAVPGALLAAIALLSAAPAQA. Intrachain disulfides connect cysteine 57–cysteine 70 and cysteine 90–cysteine 120.

This sequence belongs to the protease inhibitor I16 (SSI) family.

It localises to the secreted. This chain is Putative serine protease inhibitor SAV_2156, found in Streptomyces avermitilis (strain ATCC 31267 / DSM 46492 / JCM 5070 / NBRC 14893 / NCIMB 12804 / NRRL 8165 / MA-4680).